A 354-amino-acid chain; its full sequence is MFDALQAWLSSFLFDWLAVLITLVLQAVAVILPVMITVAWLTYAERKVIGYMQVRMGPNRVGPGGWLQPIADAIKAMTKEVVIPAQSNKYLFIIAPILALAPAVAAWAVIPFDANGVVAADINAGVLYVLAVASIGVYGIVISGWASNSKYAFLGALRASAQKISYEIAMGFALVTVLMVADTMNLTGIVEGQQGGIWNWYWIPLLPMFFVYFISGLAETNRAPFDVAEGESEIVAGFHVEYSGMAFAVFFLAEYAMMILISFMTAIMFLGGWYSPFEGIAGLESVFSWVPGFVWLFAKVAFLLFLFLWFRATFPRYRYDQIMRLGWKVLIPVTIVWVFVVGVMEYFKVSPWFN.

The next 8 membrane-spanning stretches (helical) occupy residues 16–36 (WLAVLITLVLQAVAVILPVMI), 90–110 (YLFIIAPILALAPAVAAWAVI), 126–146 (VLYVLAVASIGVYGIVISGWA), 170–190 (MGFALVTVLMVADTMNLTGIV), 197–217 (IWNWYWIPLLPMFFVYFISGL), 249–269 (VFFLAEYAMMILISFMTAIMF), 290–310 (VPGFVWLFAKVAFLLFLFLWF), and 329–349 (VLIPVTIVWVFVVGVMEYFKV).

This sequence belongs to the complex I subunit 1 family. NDH-1 is composed of 14 different subunits. Subunits NuoA, H, J, K, L, M, N constitute the membrane sector of the complex.

It is found in the cell inner membrane. The catalysed reaction is a quinone + NADH + 5 H(+)(in) = a quinol + NAD(+) + 4 H(+)(out). In terms of biological role, NDH-1 shuttles electrons from NADH, via FMN and iron-sulfur (Fe-S) centers, to quinones in the respiratory chain. The immediate electron acceptor for the enzyme in this species is believed to be ubiquinone. Couples the redox reaction to proton translocation (for every two electrons transferred, four hydrogen ions are translocated across the cytoplasmic membrane), and thus conserves the redox energy in a proton gradient. This subunit may bind ubiquinone. In Hydrogenovibrio crunogenus (strain DSM 25203 / XCL-2) (Thiomicrospira crunogena), this protein is NADH-quinone oxidoreductase subunit H.